A 781-amino-acid polypeptide reads, in one-letter code: Serine/threonine-protein kinase PLK4 (781 aa).

Residues 14–268 (YEVQHLLGKG…LEQVLRHPFM (255 aa)) enclose the Protein kinase domain. ATP-binding positions include 20 to 28 (LGKGGFACV) and K43. The Proton acceptor role is filled by D139. The region spanning 397–514 (TEHISVPPLN…ARFVGLVKSK (118 aa)) is the Cryptic POLO box 1 (CPB1) domain. The tract at residues 463-486 (QPDPGRGLPIQEQTSETHSSGTDN) is disordered. Polar residues predominate over residues 473–486 (QEQTSETHSSGTDN). A Cryptic POLO box 2 (CPB2) domain is found at 515-618 (TPKVTYFSAL…GRRPVVEVLP (104 aa)). The POLO box domain maps to 672–751 (PIKRLNVPGV…LPQVQMKLRC (80 aa)).

The protein belongs to the protein kinase superfamily. Ser/Thr protein kinase family. CDC5/Polo subfamily. As to quaternary structure, homodimer. In terms of processing, ubiquitinated by the SCF(Slimb) ubiquitin ligase complex; leading to its degradation by the proteasome during interphase and regulating centriole number and ensuring the block to centriole reduplication.

Its subcellular location is the cytoplasm. The protein localises to the cytoskeleton. The protein resides in the microtubule organizing center. It localises to the centrosome. It is found in the centriole. It carries out the reaction L-seryl-[protein] + ATP = O-phospho-L-seryl-[protein] + ADP + H(+). The enzyme catalyses L-threonyl-[protein] + ATP = O-phospho-L-threonyl-[protein] + ADP + H(+). Serine/threonine-protein kinase that plays a central role in centriole duplication. Able to trigger procentriole formation on the surface of the mother centriole cylinder, using mother centriole as a platform, leading to the recruitment of centriole biogenesis proteins such as sas-6. When overexpressed, it is able to induce centrosome amplification through the simultaneous generation of multiple procentrioles adjoining each parental centriole during S phase. Centrosome amplification following overexpression can initiate tumorigenesis, highlighting the importance of centrosome regulation in cancers. In Drosophila virilis (Fruit fly), this protein is Serine/threonine-protein kinase PLK4 (SAK).